A 38-amino-acid chain; its full sequence is Large ribosomal subunit protein bL36 (38 aa).

Belongs to the bacterial ribosomal protein bL36 family.

The sequence is that of Large ribosomal subunit protein bL36 from Mycoplasma mobile (strain ATCC 43663 / 163K / NCTC 11711) (Mesomycoplasma mobile).